Reading from the N-terminus, the 291-residue chain is Pantothenate synthetase (291 aa).

Met30–His37 provides a ligand contact to ATP. His37 acts as the Proton donor in catalysis. Position 61 (Gln61) interacts with (R)-pantoate. Gln61 contacts beta-alanine. Position 149 to 152 (Gly149 to Asp152) interacts with ATP. Residue Gln155 coordinates (R)-pantoate. Residues Val178 and Met186–Arg189 contribute to the ATP site.

The protein belongs to the pantothenate synthetase family. As to quaternary structure, homodimer.

The protein localises to the cytoplasm. The catalysed reaction is (R)-pantoate + beta-alanine + ATP = (R)-pantothenate + AMP + diphosphate + H(+). It functions in the pathway cofactor biosynthesis; (R)-pantothenate biosynthesis; (R)-pantothenate from (R)-pantoate and beta-alanine: step 1/1. Catalyzes the condensation of pantoate with beta-alanine in an ATP-dependent reaction via a pantoyl-adenylate intermediate. The sequence is that of Pantothenate synthetase from Aliivibrio fischeri (strain ATCC 700601 / ES114) (Vibrio fischeri).